Reading from the N-terminus, the 73-residue chain is Large ribosomal subunit protein uL24 (73 aa).

Basic and acidic residues predominate over residues 51–65; that stretch reads DDNPKGGFIHKEKPM. The segment at 51 to 73 is disordered; that stretch reads DDNPKGGFIHKEKPMHISNVKKA.

This sequence belongs to the universal ribosomal protein uL24 family. In terms of assembly, part of the 50S ribosomal subunit.

One of two assembly initiator proteins, it binds directly to the 5'-end of the 23S rRNA, where it nucleates assembly of the 50S subunit. Functionally, one of the proteins that surrounds the polypeptide exit tunnel on the outside of the subunit. This is Large ribosomal subunit protein uL24 from Helicobacter pylori (strain Shi470).